A 273-amino-acid chain; its full sequence is Type III pantothenate kinase (273 aa).

ATP is bound at residue aspartate 5–valine 12. Glycine 112–leucine 115 provides a ligand contact to substrate. The Proton acceptor role is filled by aspartate 114. Aspartate 134 is a K(+) binding site. Threonine 137 is an ATP binding site. Threonine 189 contacts substrate.

The protein belongs to the type III pantothenate kinase family. In terms of assembly, homodimer. It depends on NH4(+) as a cofactor. The cofactor is K(+).

The protein localises to the cytoplasm. It catalyses the reaction (R)-pantothenate + ATP = (R)-4'-phosphopantothenate + ADP + H(+). Its pathway is cofactor biosynthesis; coenzyme A biosynthesis; CoA from (R)-pantothenate: step 1/5. Its function is as follows. Catalyzes the phosphorylation of pantothenate (Pan), the first step in CoA biosynthesis. The sequence is that of Type III pantothenate kinase from Treponema pallidum subsp. pallidum (strain SS14).